The chain runs to 71 residues: Large ribosomal subunit protein bL31 (71 aa).

Positions 16, 18, 37, and 40 each coordinate Zn(2+).

This sequence belongs to the bacterial ribosomal protein bL31 family. Type A subfamily. Part of the 50S ribosomal subunit. The cofactor is Zn(2+).

Binds the 23S rRNA. This chain is Large ribosomal subunit protein bL31, found in Sodalis glossinidius (strain morsitans).